The sequence spans 235 residues: Ribosomal RNA small subunit methyltransferase G (235 aa).

Residues Gly-74, Phe-79, 97-99 (EAT), 125-126 (AE), and Arg-144 contribute to the S-adenosyl-L-methionine site.

Belongs to the methyltransferase superfamily. RNA methyltransferase RsmG family.

It localises to the cytoplasm. Its function is as follows. Specifically methylates the N7 position of a guanine in 16S rRNA. The chain is Ribosomal RNA small subunit methyltransferase G from Dehalococcoides mccartyi (strain CBDB1).